A 129-amino-acid chain; its full sequence is Cortical cell-delineating protein (129 aa).

Positions 1–19 form a signal peptide, or 21; that stretch reads MAPKVALFLALSLLFAATA. Asn25 carries N-linked (GlcNAc...) asparagine glycosylation. 2 consecutive repeat copies span residues 29 to 34 and 35 to 40. Residues 29-40 form a 2 X 6 AA tandem repeats of P-V-V-P-T-P region; that stretch reads PVVPTPPVVPTP.

The protein to carrot DC2.15 and PEMB3. Cortical ground meristem of developing roots.

Functionally, delineates a novel subset of developing cortical cells. It is probably involved in some aspect of transport of molecules to or from the vasculature. The chain is Cortical cell-delineating protein from Zea mays (Maize).